A 252-amino-acid polypeptide reads, in one-letter code: Chitooligosaccharide deacetylase (252 aa).

The Mg(2+) site is built by His-61 and His-125.

The protein belongs to the YdjC deacetylase family. ChbG subfamily. Homodimer. Mg(2+) serves as cofactor.

The protein resides in the cytoplasm. The catalysed reaction is N,N'-diacetylchitobiose + H2O = N-acetyl-beta-D-glucosaminyl-(1-&gt;4)-D-glucosamine + acetate. It carries out the reaction diacetylchitobiose-6'-phosphate + H2O = N'-monoacetylchitobiose-6'-phosphate + acetate. Its pathway is glycan degradation; chitin degradation. Involved in the degradation of chitin. ChbG is essential for growth on the acetylated chitooligosaccharides chitobiose and chitotriose but is dispensable for growth on cellobiose and chitosan dimer, the deacetylated form of chitobiose. Deacetylation of chitobiose-6-P and chitotriose-6-P is necessary for both the activation of the chb promoter by the regulatory protein ChbR and the hydrolysis of phosphorylated beta-glucosides by the phospho-beta-glucosidase ChbF. Catalyzes the removal of only one acetyl group from chitobiose-6-P to yield monoacetylchitobiose-6-P, the inducer of ChbR and the substrate of ChbF. The polypeptide is Chitooligosaccharide deacetylase (Escherichia fergusonii (strain ATCC 35469 / DSM 13698 / CCUG 18766 / IAM 14443 / JCM 21226 / LMG 7866 / NBRC 102419 / NCTC 12128 / CDC 0568-73)).